We begin with the raw amino-acid sequence, 104 residues long: Large ribosomal subunit protein bL21 (104 aa).

Belongs to the bacterial ribosomal protein bL21 family. In terms of assembly, part of the 50S ribosomal subunit. Contacts protein L20.

Functionally, this protein binds to 23S rRNA in the presence of protein L20. The protein is Large ribosomal subunit protein bL21 of Alkalilimnicola ehrlichii (strain ATCC BAA-1101 / DSM 17681 / MLHE-1).